Here is a 498-residue protein sequence, read N- to C-terminus: ATP synthase subunit beta, chloroplastic (498 aa).

172-179 contributes to the ATP binding site; the sequence is GGAGVGKT.

Belongs to the ATPase alpha/beta chains family. In terms of assembly, F-type ATPases have 2 components, CF(1) - the catalytic core - and CF(0) - the membrane proton channel. CF(1) has five subunits: alpha(3), beta(3), gamma(1), delta(1), epsilon(1). CF(0) has four main subunits: a(1), b(1), b'(1) and c(9-12).

The protein localises to the plastid. It is found in the chloroplast thylakoid membrane. The catalysed reaction is ATP + H2O + 4 H(+)(in) = ADP + phosphate + 5 H(+)(out). Functionally, produces ATP from ADP in the presence of a proton gradient across the membrane. The catalytic sites are hosted primarily by the beta subunits. This is ATP synthase subunit beta, chloroplastic from Saruma henryi (Upright wild ginger).